A 92-amino-acid chain; its full sequence is Large ribosomal subunit protein eL31 (92 aa).

The protein belongs to the eukaryotic ribosomal protein eL31 family.

The protein is Large ribosomal subunit protein eL31 of Halorubrum lacusprofundi (strain ATCC 49239 / DSM 5036 / JCM 8891 / ACAM 34).